Here is a 278-residue protein sequence, read N- to C-terminus: Formamidopyrimidine-DNA glycosylase (278 aa).

The Schiff-base intermediate with DNA role is filled by Pro2. Glu3 acts as the Proton donor in catalysis. Lys60 functions as the Proton donor; for beta-elimination activity in the catalytic mechanism. His95 and Arg114 together coordinate DNA. The segment at 244–278 (WVYRRGGEPCRRCGTIIRRDKLSGRSTHWCPTCQG) adopts an FPG-type zinc-finger fold. Arg268 (proton donor; for delta-elimination activity) is an active-site residue.

The protein belongs to the FPG family. As to quaternary structure, monomer. Zn(2+) is required as a cofactor.

The catalysed reaction is Hydrolysis of DNA containing ring-opened 7-methylguanine residues, releasing 2,6-diamino-4-hydroxy-5-(N-methyl)formamidopyrimidine.. It carries out the reaction 2'-deoxyribonucleotide-(2'-deoxyribose 5'-phosphate)-2'-deoxyribonucleotide-DNA = a 3'-end 2'-deoxyribonucleotide-(2,3-dehydro-2,3-deoxyribose 5'-phosphate)-DNA + a 5'-end 5'-phospho-2'-deoxyribonucleoside-DNA + H(+). Involved in base excision repair of DNA damaged by oxidation or by mutagenic agents. Acts as a DNA glycosylase that recognizes and removes damaged bases. Has a preference for oxidized purines, such as 7,8-dihydro-8-oxoguanine (8-oxoG). Has AP (apurinic/apyrimidinic) lyase activity and introduces nicks in the DNA strand. Cleaves the DNA backbone by beta-delta elimination to generate a single-strand break at the site of the removed base with both 3'- and 5'-phosphates. This chain is Formamidopyrimidine-DNA glycosylase, found in Parasynechococcus marenigrum (strain WH8102).